The chain runs to 867 residues: FO synthase (867 aa).

A disordered region spans residues 1-22 (MTTSATSGTGPADPAGPTENSM). Radical SAM core domains lie at 75–325 (ITYS…LQAP) and 534–769 (VTYI…LLHP). The interval 76 to 407 (TYSKSVFVPL…PRLRPHVAAL (332 aa)) is cofG-like. Residues Cys89, Cys93, Cys96, Cys548, Cys552, and Cys555 each contribute to the [4Fe-4S] cluster site. The cofH-like stretch occupies residues 511 to 844 (EGPALDALCG…KPRTTLYGPV (334 aa)). A disordered region spans residues 835-867 (KPRTTLYGPVPEERQRAARDSDGHLPELLPVLD). Basic and acidic residues predominate over residues 845 to 859 (PEERQRAARDSDGHL).

In the N-terminal section; belongs to the radical SAM superfamily. CofG family. The protein in the C-terminal section; belongs to the radical SAM superfamily. CofH family. Requires [4Fe-4S] cluster as cofactor.

It catalyses the reaction 5-amino-6-(D-ribitylamino)uracil + L-tyrosine + S-adenosyl-L-methionine = 5-amino-5-(4-hydroxybenzyl)-6-(D-ribitylimino)-5,6-dihydrouracil + 2-iminoacetate + 5'-deoxyadenosine + L-methionine + H(+). It carries out the reaction 5-amino-5-(4-hydroxybenzyl)-6-(D-ribitylimino)-5,6-dihydrouracil + S-adenosyl-L-methionine = 7,8-didemethyl-8-hydroxy-5-deazariboflavin + 5'-deoxyadenosine + L-methionine + NH4(+) + H(+). Its pathway is cofactor biosynthesis; coenzyme F0 biosynthesis. Catalyzes the radical-mediated synthesis of 7,8-didemethyl-8-hydroxy-5-deazariboflavin (FO) from 5-amino-6-(D-ribitylamino)uracil and L-tyrosine. In Streptomyces coelicolor (strain ATCC BAA-471 / A3(2) / M145), this protein is FO synthase (fbiC).